A 203-amino-acid chain; its full sequence is Guanylate kinase (203 aa).

The region spanning 3 to 181 (GTLYIVAAPS…AVSEMCAIFT (179 aa)) is the Guanylate kinase-like domain. 10–17 (APSGAGKS) lines the ATP pocket.

Belongs to the guanylate kinase family.

The protein resides in the cytoplasm. The enzyme catalyses GMP + ATP = GDP + ADP. In terms of biological role, essential for recycling GMP and indirectly, cGMP. This chain is Guanylate kinase, found in Xanthomonas axonopodis pv. citri (strain 306).